Here is a 251-residue protein sequence, read N- to C-terminus: Diphthine synthase (251 aa).

S-adenosyl-L-methionine contacts are provided by residues Asp83, Leu86, Ser111–Ile112, Leu163, and Leu205.

It belongs to the diphthine synthase family. In terms of assembly, homodimer.

The enzyme catalyses 2-[(3S)-amino-3-carboxypropyl]-L-histidyl-[translation elongation factor 2] + 3 S-adenosyl-L-methionine = diphthine-[translation elongation factor 2] + 3 S-adenosyl-L-homocysteine + 3 H(+). The protein operates within protein modification; peptidyl-diphthamide biosynthesis. Its function is as follows. S-adenosyl-L-methionine-dependent methyltransferase that catalyzes the trimethylation of the amino group of the modified target histidine residue in translation elongation factor 2 (EF-2), to form an intermediate called diphthine. The three successive methylation reactions represent the second step of diphthamide biosynthesis. In Pyrobaculum calidifontis (strain DSM 21063 / JCM 11548 / VA1), this protein is Diphthine synthase.